The sequence spans 140 residues: MAGLPDKDKLIRNFSRCLNWEEKYLYVIELGAQLPPLTEQQRQPDNLISGCQSQVWIAMSTSTEGQVVFAGDSDAAIVKGLVVVVFILYQGLTPQQIIDLDVRPFFADLALSQHLTPSRSQGLEAMIRAIRAKAAVLKAG.

Cys-51 serves as the catalytic Cysteine persulfide intermediate.

It belongs to the SufE family. Homodimer. Interacts with SufS.

It localises to the cytoplasm. It participates in cofactor biosynthesis; iron-sulfur cluster biosynthesis. Participates in cysteine desulfuration mediated by SufS. Cysteine desulfuration mobilizes sulfur from L-cysteine to yield L-alanine and constitutes an essential step in sulfur metabolism for biosynthesis of a variety of sulfur-containing biomolecules. Functions as a sulfur acceptor for SufS, by mediating the direct transfer of the sulfur atom from the S-sulfanylcysteine of SufS, an intermediate product of cysteine desulfuration process. This Yersinia enterocolitica serotype O:8 / biotype 1B (strain NCTC 13174 / 8081) protein is Cysteine desulfuration protein SufE.